The chain runs to 617 residues: Dihydroxy-acid dehydratase (617 aa).

Residue aspartate 81 participates in Mg(2+) binding. Residue cysteine 122 participates in [2Fe-2S] cluster binding. Mg(2+) contacts are provided by aspartate 123 and lysine 124. The residue at position 124 (lysine 124) is an N6-carboxylysine. [2Fe-2S] cluster is bound at residue cysteine 195. Glutamate 491 provides a ligand contact to Mg(2+). The active-site Proton acceptor is serine 517.

It belongs to the IlvD/Edd family. As to quaternary structure, homodimer. Requires [2Fe-2S] cluster as cofactor. Mg(2+) is required as a cofactor.

The enzyme catalyses (2R)-2,3-dihydroxy-3-methylbutanoate = 3-methyl-2-oxobutanoate + H2O. It catalyses the reaction (2R,3R)-2,3-dihydroxy-3-methylpentanoate = (S)-3-methyl-2-oxopentanoate + H2O. The protein operates within amino-acid biosynthesis; L-isoleucine biosynthesis; L-isoleucine from 2-oxobutanoate: step 3/4. It participates in amino-acid biosynthesis; L-valine biosynthesis; L-valine from pyruvate: step 3/4. Functions in the biosynthesis of branched-chain amino acids. Catalyzes the dehydration of (2R,3R)-2,3-dihydroxy-3-methylpentanoate (2,3-dihydroxy-3-methylvalerate) into 2-oxo-3-methylpentanoate (2-oxo-3-methylvalerate) and of (2R)-2,3-dihydroxy-3-methylbutanoate (2,3-dihydroxyisovalerate) into 2-oxo-3-methylbutanoate (2-oxoisovalerate), the penultimate precursor to L-isoleucine and L-valine, respectively. This is Dihydroxy-acid dehydratase from Hydrogenovibrio crunogenus (strain DSM 25203 / XCL-2) (Thiomicrospira crunogena).